A 243-amino-acid chain; its full sequence is Protein IN2-1 homolog A (243 aa).

Residues 31–112 enclose the GST N-terminal domain; the sequence is GTTRLYICYF…YIDSHFEGPA (82 aa). Glutathione-binding positions include K70, V84, and 96 to 97; that span reads ES. The GST C-terminal domain maps to 117–240; it reads DPEKRQFADE…YLLDLAKTHL (124 aa).

The protein belongs to the GST superfamily. HSP26 family.

The sequence is that of Protein IN2-1 homolog A from Oryza sativa subsp. japonica (Rice).